The following is a 773-amino-acid chain: MRNFRSSVLVVLSLIIVLNVARASAKSKVHIVYLGEKQHDDPKFVTESHHQMLSSLLGSKDDAHESMVYSYRHGFSGFAAKLTKSQAKKIADSPEVIHVIPDSYYELATTRIWDYLGPSADNSKNLVSDTNMGDQTIIGVIDTGVWPESESFNDYGVGPVPSHWKGGCEPGENFISTNCNRKLIGAKYFINGFLAENQFNATESPDYISARDFDGHGTHVASIAGGSFVPNVSYKGLGRGTLRGGAPRARIAMYKACWYINELDGVTCSFSDIMKAIDEAIHDGVDVLSISLGGRVPLNSETDLRDGIATGAFHAVAKGIVVVCAGGNAGPSSQTVVNTAPWILTVAATTLDRSFATPIILGNNQVILGQAMYIGPELGFTSLVYPEDPGNSIDTFSGVCESLNLNSNRTMAGKVVLCFTTARDFTVVSTAASIVKAAGGLGLIIARNPGYNLAPCSDDFPCVAIDNELGTDILFYIRYTGSPVVKIQPSRTLVGEPVGTKVATFSSRGPNSISPAILKPDIAAPGVSILAATSPNDTLNAGGFVMRSGTSMAAPVISGVIALLKSLHPDWSPAAFRSAIVTTAWRTDPFGEQIAAESSSLKVPDPFDYGGGLVNPEKAAEPGLILDMDSQDYVLYLCSAGYNDSSISRLVGKVTVCSNPKPSVLDINLPSITIPNLKDEVTLTRTVTNVGPVDSVYKVLVEPPLGIQVVVTPETLVFNSKTKSVSFTVIVSTTHKINTGFYFGSLTWTDSIHNVVIPVSVRTQILQNYYDEN.

A signal peptide spans 1-23; sequence MRNFRSSVLVVLSLIIVLNVARA. Positions 24-108 are cleaved as a propeptide — activation peptide; that stretch reads SAKSKVHIVY…VIPDSYYELA (85 aa). One can recognise an Inhibitor I9 domain in the interval 29–108; that stretch reads VHIVYLGEKQ…VIPDSYYELA (80 aa). A Peptidase S8 domain is found at 112-620; that stretch reads IWDYLGPSAD…GGLVNPEKAA (509 aa). The Charge relay system role is filled by Asp-142. Residue Asn-200 is glycosylated (N-linked (GlcNAc...) asparagine). His-216 (charge relay system) is an active-site residue. 3 N-linked (GlcNAc...) asparagine glycosylation sites follow: Asn-231, Asn-408, and Asn-536. A PA domain is found at 382–474; sequence SLVYPEDPGN…IDNELGTDIL (93 aa). Ser-551 functions as the Charge relay system in the catalytic mechanism. A glycan (N-linked (GlcNAc...) asparagine) is linked at Asn-643.

This sequence belongs to the peptidase S8 family.

The protein resides in the secreted. This Arabidopsis thaliana (Mouse-ear cress) protein is Subtilisin-like protease SBT3.4.